A 169-amino-acid polypeptide reads, in one-letter code: Protein YABBY 7 (169 aa).

The segment at 21-48 (CSFCATVLLVSVPCSSVLRVVAVQCGHC) adopts a C4-type zinc-finger fold. The disordered stretch occupies residues 63 to 122 (SASIELTPQELDAGPPPGEYSDESSGDDREGRDAEDDAPAPAAAAVANKPPGRKQRTPSA).

This sequence belongs to the YABBY family. In terms of tissue distribution, expressed in leaf sheaths and flowers.

It is found in the nucleus. This is Protein YABBY 7 (YAB7) from Oryza sativa subsp. japonica (Rice).